Consider the following 387-residue polypeptide: Involucrin (387 aa).

Disordered regions lie at residues 1 to 319 (MSQQ…VHLG) and 347 to 387 (VCIP…LKQE). Polar residues predominate over residues 28 to 37 (NTQQDQMKQP). A compositionally biased stretch (low complexity) spans 62 to 71 (QVPEQECEPQ). 4 stretches are compositionally biased toward basic and acidic residues: residues 85 to 96 (KQQEPQEQEVHP), 104 to 115 (QEQEAHLGKKQE), 147 to 179 (QEVH…KQLQ), and 231 to 245 (QLEK…ELHL).

The protein belongs to the involucrin family. Directly or indirectly cross-linked to cornifelin (CNFN). In terms of processing, substrate of transglutaminase. Specific glutamines or lysines are cross-linked to keratins, desmoplakin and to inter involucrin molecules. As to expression, keratinocytes of epidermis and other stratified squamous epithelia.

It localises to the cytoplasm. Its function is as follows. Part of the insoluble cornified cell envelope (CE) of stratified squamous epithelia. This is Involucrin (IVL) from Cephalopachus bancanus (Western tarsier).